Here is a 302-residue protein sequence, read N- to C-terminus: Acidic endochitinase (302 aa).

A signal peptide spans methionine 1 to glycine 30. Residues glycine 31–valine 302 enclose the GH18 domain. Cystine bridges form between cysteine 49–cysteine 96 and cysteine 79–cysteine 86. Glutamate 156 serves as the catalytic Proton donor. Cysteines 188 and 217 form a disulfide.

It belongs to the glycosyl hydrolase 18 family. Chitinase class III subfamily.

Its subcellular location is the secreted. It localises to the extracellular space. The enzyme catalyses Random endo-hydrolysis of N-acetyl-beta-D-glucosaminide (1-&gt;4)-beta-linkages in chitin and chitodextrins.. This protein functions as a defense against chitin containing fungal pathogens. The polypeptide is Acidic endochitinase (CHIB1) (Arabidopsis thaliana (Mouse-ear cress)).